Consider the following 170-residue polypeptide: Transcription factor E (170 aa).

The HTH TFE/IIEalpha-type domain maps to 1 to 93 (MKDVYLYIVE…TWYVNDEVIS (93 aa)).

This sequence belongs to the TFE family. In terms of assembly, monomer. Interaction with RNA polymerase subunits RpoF and RpoE is necessary for Tfe stimulatory transcription activity. Able to interact with Tbp and RNA polymerase in the absence of DNA promoter. Interacts both with the preinitiation and elongation complexes.

Transcription factor that plays a role in the activation of archaeal genes transcribed by RNA polymerase. Facilitates transcription initiation by enhancing TATA-box recognition by TATA-box-binding protein (Tbp), and transcription factor B (Tfb) and RNA polymerase recruitment. Not absolutely required for transcription in vitro, but particularly important in cases where Tbp or Tfb function is not optimal. It dynamically alters the nucleic acid-binding properties of RNA polymerases by stabilizing the initiation complex and destabilizing elongation complexes. Seems to translocate with the RNA polymerase following initiation and acts by binding to the non template strand of the transcription bubble in elongation complexes. The chain is Transcription factor E from Pyrobaculum calidifontis (strain DSM 21063 / JCM 11548 / VA1).